The sequence spans 510 residues: Probable gamma-aminobutyrate transaminase 3, mitochondrial (510 aa).

Residues 1–41 (MICRSLLLLRSNAASKASNIVKHVAATGCLPKYSSEAPARY) constitute a mitochondrion transit peptide. 166–167 (GS) lines the pyridoxal 5'-phosphate pocket. Y199 serves as a coordination point for substrate. D306 provides a ligand contact to pyridoxal 5'-phosphate. K335 lines the substrate pocket. The residue at position 335 (K335) is an N6-(pyridoxal phosphate)lysine.

It belongs to the class-III pyridoxal-phosphate-dependent aminotransferase family.

The protein resides in the mitochondrion. The enzyme catalyses 4-aminobutanoate + pyruvate = succinate semialdehyde + L-alanine. It carries out the reaction 4-aminobutanoate + glyoxylate = succinate semialdehyde + glycine. In terms of biological role, transaminase that degrades gamma-amino butyric acid (GABA). The chain is Probable gamma-aminobutyrate transaminase 3, mitochondrial from Oryza sativa subsp. japonica (Rice).